Here is a 1516-residue protein sequence, read N- to C-terminus: MDSPPKLTGETLIVHHIPLVHCQVPDRQCCGGAGGGGGSTRPNPFCPPELGITQPDQDLGQADSLLFSSLHSTPGGTARSIDSTKSRSRDGRGPGAPKRHNPFLLQEGVGEPGLGDLYDDSIGDSATQQSFHLHGTGQPNFHLSSFQLPPSGPRVGRPWGTTRSRAGVVEGQEQEPVMTLDTQQCGTSHCCRPELEAETMELDECGGPGGSGSGGGASDTSGFSFDQEWKLSSDESPRNPGCSGSGDQHCRCSSTSSQSEAADQSMGYVSDSSCNSSDGVLVTFSTLYNKMHGTPRANLNSAPQSCSDSSFCSHSDPGAFYLDLQPSPFESKMSYESHHPESGGREGGYGCPHASSPELDANCNSYRPHCEPCPAVADLTACFQSQARLVVATQNYYKLVTCDLSSQSSPSPAGSSITSCSEEHTKISPPPGPGPDPGPSQPSEYYLFQKPEVQPEEQEAVSSSTQAAAAVGPTVLEGQVYTNTSPPNLSTGRQRSRSYDRSLQRSPPVRLGSLERMLSCPVRLSEGPAAMAGPGSPPRRVTSFAELAKGRKKTGGSGSPPLRVSVGDSSQEFSPIQEAQQDRGAPLDEGTCCSHSLPPMPLGPGMDLLGPDPSPPWSTQVCQGPHSSEMPPAGLRATGQGPLAQLMDPGPALPGSPANSHTQRDARARADGGGTESRPVLRYSKEQRPTTLPIQPFVFQHHFPKQLAKARALHSLSQLYSLSGCSRTQQPAPLAAPAAQVSVPAPSGEPQASTPRATGRGARKAGSEPETSRPSPLGSYSPIRSVGPFGPSTDSSASTSCSPPPEQPTATESLPPWSHSCPSAVRPATSQQPQKEDQKILTLTEYRLHGTGSLPPLGSWRSGLSRAESLARGGGEGSMATRPSNANHLSPQALKWREYRRKNPLGPPGLSGSLDRRSQEARLARRNPIFEFPGSLSAASHLNCRLNGQAVKPLPLTCPDFQDPFSLTEKPPAEFCLSPDGSSEAISIDLLQKKGLVKAVNIAVDLIVAHFGTSRDPGVKAKLGNSSVSPNVGHLVLKYLCPAVRAVLEDGLKAFVLDVIIGQRKNMPWSVVEASTQLGPSTKVLHGLYNKVSQFPELTSHTMRFNAFILGLLNIRSLEFWFNHLYNHEDIIQTHYQPWGFLSAAHTVCPGLFEELLLLLQPLALLPFSLDLLFQHRLLQSGQQQRQHKELLRVSQDLLLSAHSTLQLARARGQEGPGDVDRAAQGERVKGVGASEGGEEEEEEEETEEVAEAAGGSGRARWARGGQAGWWYQLMQSSQVYIDGSIEGSRFPRGSSNSSSEKKKGAGGGGPPQAPPPREGVVEGAEACPASEEALGRERGWPFWMGSPPDSVLAELRRSREREGPAASPAENEEGASEPSPGGIKWGHLFGSRKAQREARPTNRLPSDWLSLDKSMFQLVAQTVGSRREPEPKESLQEPHSPALPSSPPCEVQALCHHLATGPGQLSFHKGDILRVLGRAGGDWLRCSRGPDSGLVPLAYVTLTPTPSPTPGSSQN.

Disordered stretches follow at residues 33–105 (AGGG…PFLL), 202–224 (LDEC…SGFS), 229–248 (WKLS…SGDQ), 331–351 (SKMS…GYGC), 404–445 (LSSQ…PSEY), and 478–511 (GQVY…PVRL). A compositionally biased stretch (polar residues) spans 66-81 (LFSSLHSTPGGTARSI). Basic and acidic residues predominate over residues 82–92 (DSTKSRSRDGR). Positions 206-217 (GGPGGSGSGGGA) are enriched in gly residues. Basic and acidic residues predominate over residues 333-344 (MSYESHHPESGG). Residues 405–420 (SSQSSPSPAGSSITSC) are compositionally biased toward low complexity. The segment covering 428–440 (SPPPGPGPDPGPS) has biased composition (pro residues). The segment covering 480-493 (VYTNTSPPNLSTGR) has biased composition (polar residues). S536, S543, and S559 each carry phosphoserine. Disordered stretches follow at residues 550–588 (GRKK…APLD), 646–688 (LMDP…KEQR), 727–836 (RTQQ…PQKE), and 868–889 (ESLA…ANHL). Polar residues predominate over residues 567 to 579 (GDSSQEFSPIQEA). At S656 the chain carries Phosphoserine. A compositionally biased stretch (low complexity) spans 729–746 (QQPAPLAAPAAQVSVPAP). Phosphoserine is present on S781. Residues 791 to 801 (PSTDSSASTSC) show a composition bias toward low complexity. The RUN domain maps to 1031–1175 (NVGHLVLKYL…LPFSLDLLFQ (145 aa)). Disordered regions lie at residues 1210 to 1261 (RARG…GRAR), 1286 to 1408 (IEGS…LPSD), and 1422 to 1449 (QTVG…SSPP). Basic and acidic residues predominate over residues 1219 to 1230 (DVDRAAQGERVK). Residues 1237–1251 (GGEEEEEEEETEEVA) are compositionally biased toward acidic residues. Basic and acidic residues predominate over residues 1355 to 1364 (ELRRSREREG). Residues S1368 and S1380 each carry the phosphoserine modification. The span at 1426–1437 (SRREPEPKESLQ) shows a compositional bias: basic and acidic residues. The 60-residue stretch at 1447 to 1506 (SPPCEVQALCHHLATGPGQLSFHKGDILRVLGRAGGDWLRCSRGPDSGLVPLAYVTLTPT) folds into the SH3 domain.

As to quaternary structure, associated component of the adapter-like complex 4 (AP-4). Interacts with active RAB1A and RAB1B, and with GOLGA2. Interacts (via RUN domain) with RAB35 (GTP-bound form); the interaction recruits RUSC2 to the plasma membrane. Widely expressed, with highest levels in brain and testis.

Its subcellular location is the cytoplasm. It localises to the cytosol. The protein resides in the cell membrane. In terms of biological role, associates with the adapter-like complex 4 (AP-4) and may therefore play a role in vesicular trafficking of proteins at the trans-Golgi network. The polypeptide is AP-4 complex accessory subunit RUSC2 (Homo sapiens (Human)).